Here is a 507-residue protein sequence, read N- to C-terminus: Iroquois-class homeodomain protein IRX-3 (507 aa).

The interval Arg-19–Gly-39 is disordered. The segment covering Ala-22–Gly-39 has biased composition (gly residues). The segment at residues Asp-130 to Asn-192 is a DNA-binding region (homeobox; TALE-type). 2 disordered regions span residues Lys-193–Ala-398 and Arg-416–Asp-468. 2 stretches are compositionally biased toward acidic residues: residues Arg-213–Glu-223 and Glu-230–Asn-261. Pro residues-rich tracts occupy residues Ala-314–Ala-342 and Phe-418–His-428. A phosphoserine mark is found at Ser-326 and Ser-329. The span at Ala-436–Pro-460 shows a compositional bias: low complexity.

Belongs to the TALE/IRO homeobox family. In terms of tissue distribution, expressed by neural progenitor cells in discrete domains of the ventral neural tube. Also expressed in specific and overlapping patterns with Irx1 and Irx2 in the developing and adult metanephric kidney. In the adult metanephros, renal expression is confined to the S3 segment of the proximal tubule, in the loop of Henle.

It is found in the nucleus. Functionally, transcription factor involved in SHH-dependent neural patterning. Together with NKX2-2 and NKX6-1 acts to restrict the generation of motor neurons to the appropriate region of the neural tube. Belongs to the class I proteins of neuronal progenitor factors, which are repressed by SHH signals. Involved in the transcriptional repression of MNX1 in non-motor neuron cells. Acts as a regulator of energy metabolism. This Mus musculus (Mouse) protein is Iroquois-class homeodomain protein IRX-3 (Irx3).